The following is a 60-amino-acid chain: Putative potassium channel blocker TXKS1 (60 aa).

A signal peptide spans 1–28; sequence MNRLTTIILMLIVINVIMDDISESKVAA. Cystine bridges form between Cys-32/Cys-49, Cys-35/Cys-55, and Cys-39/Cys-57. Lys-59 is modified (lysine amide).

As to expression, expressed by the venom gland.

Its subcellular location is the secreted. Its function is as follows. Inhibits potassium channels. In Olivierus martensii (Manchurian scorpion), this protein is Putative potassium channel blocker TXKS1.